A 130-amino-acid polypeptide reads, in one-letter code: Tripartite terminase subunit 2 (130 aa).

This sequence belongs to the herpesviridae TRM2 protein family. In terms of assembly, associates with TRM1 and TRM3 to form the tripartite terminase complex.

The protein localises to the host nucleus. In terms of biological role, component of the molecular motor that translocates viral genomic DNA in empty capsid during DNA packaging. Forms a tripartite terminase complex together with TRM1 and TRM3 in the host cytoplasm. Once the complex reaches the host nucleus, it interacts with the capsid portal vertex. This portal forms a ring in which genomic DNA is translocated into the capsid. The sequence is that of Tripartite terminase subunit 2 from Homo sapiens (Human).